The primary structure comprises 156 residues: Arginine repressor (156 aa).

This sequence belongs to the ArgR family.

It localises to the cytoplasm. It participates in amino-acid biosynthesis; L-arginine biosynthesis [regulation]. Regulates arginine biosynthesis genes. This chain is Arginine repressor, found in Proteus mirabilis (strain HI4320).